We begin with the raw amino-acid sequence, 776 residues long: Cullin-1 (776 aa).

An Omega-N-methylarginine modification is found at Arg63. The Cullin neddylation domain occupies 706-766; sequence DRKLLIQAAI…IEKEYLERVD (61 aa). Residue Lys720 forms a Glycyl lysine isopeptide (Lys-Gly) (interchain with G-Cter in NEDD8) linkage.

Belongs to the cullin family. As to quaternary structure, component of multiple Cul1-RING E3 ubiquitin-protein ligase complexes commonly known as SCF (SKP1-CUL1-F-box) complexes, consisting of CUL1, SKP1, RBX1 and a variable F-box domain-containing protein as substrate-specific subunit. Component of the SCF(FBXW11) complex containing FBXW11. Component of the SCF(SKP2) complex containing SKP2, in which it interacts directly with SKP1, SKP2 and RBX1. Component of the SCF(FBXW2) complex containing FBXW2. Component of the SCF(FBXO32) complex containing FBXO32. Component of the probable SCF(FBXO7) complex containing FBXO7. Component of the SCF(FBXO10) complex containing FBXO10. Component of the SCF(FBXO11) complex containing FBXO11. Component of the SCF(FBXO25) complex containing FBXO25. Component of the SCF(FBXO33) complex containing FBXO33. Component of the probable SCF(FBXO4) complex containing FBXO4. Component of the SCF(FBXO44) complex, composed of SKP1, CUL1 and FBXO44. Component of the SCF(BTRC) complex, composed of SKP1, CUL1 and BTRC. This complex binds phosphorylated NFKBIA. Part of a SCF complex consisting of CUL1, RBX1, SKP1 and FBXO2. Component of a SCF(SKP2)-like complex containing CUL1, SKP1, TRIM21 and SKP2. Component of the SCF(FBXO17) complex, composed of SKP1, CUL1 and FBXO17. Component of the SCF(FBXO27) complex, composed of SKP1, CUL1 and FBXO27. Component of the SCF(CCNF) complex consisting of CUL1, RBX1, SKP1 and CCNF. Interacts with CCNF. Component of the SCF(FBXL3) complex composed of CUL1, SKP1, RBX1 and FBXL3. Component of the SCF(FBXL21) complex composed of CUL1, SKP1, RBX1 and FBXL21. Component of the SCF(FBXO9) composed of CUL1, SKP1, RBX1 and FBXO9. Component of the SCF(FBXW7) composed of CUL1, SKP1, RBX1 and FBXW7. Component of the SCF(FBXO31) complex composed of CUL1, SKP1, RBX1 and FBXO31. Interacts with CHEK2; mediates CHEK2 ubiquitination and regulates its function. Part of a complex with TIP120A/CAND1 and RBX1. The unneddylated form interacts with TIP120A/CAND1 and the interaction mediates the exchange of the F-box substrate-specific subunit. Can self-associate. Interacts with FBXW8. Interacts with RNF7. Interacts with TRIM21. Interacts with COPS2. Interacts with UBE2M. Identified in a complex with RBX1 and GLMN. Interacts with CEP68 as part of the SCF(FBXW11) complex; the interaction is probably mediated by FBXW11 and the complex also contains CDK5RAP2 and PCNT. Interacts (when neddylated) with ARIH1; leading to activate the E3 ligase activity of ARIH1. Interacts with COPS9 isoform 2. Interacts with UBXN1. Interacts with KAT7, probably as part of an SCF complex; the interaction mediates KAT7 ubiquitination. Interacts with NOTCH2. Part of a complex that contains DCUN1D5, CUL1 and RBX1; this complex is bridged by CUL1. Interacts (unneddylated form) with DCUN1D1, DCUN1D2, DCUN1D3, DCUN1D4 and DCUN1D5; these interactions promote the cullin neddylation. Interacts (via the C-terminal domain) with CUL7; the interaction seems to be mediated by FBXW8; it is likely specific to FBXW8, but not other F-box proteins. Interacts with UBR2, as part of SCF(BTRC) complex; the interaction mediates 'Lys-48'-linked ubiquitination of UBR2 and is regulated by DUSP22 in the T-cell receptor signaling pathway. In terms of assembly, (Microbial infection) Interacts with Epstein-Barr virus BPLF1. (Microbial infection) Interacts with Human adenovirus early E1A protein; this interaction inhibits RBX1-CUL1-dependent elongation reaction of ubiquitin chains by the SCF(FBXW7) complex. As to quaternary structure, (Microbial infection) Interacts with vaccinia virus protein C9L. In terms of assembly, (Microbial infection) Interacts with Epstein-Barr virus (EBV) tegument protein BGLF2; this interaction might facilitate CUL1 recruitment to STAT2, leading to ubiquitination and degradation of the latter. Neddylated; which enhances the ubiquitination activity of SCF. Neddylation prevents binding of the inhibitor CAND1. Neddylation leads to structural rearrangment in the complex that allows interaction between the E2 ubiquitin-conjugating enzyme and the acceptor ubiquitin. Deneddylated via its interaction with the COP9 signalosome (CSN) complex. In terms of processing, (Microbial infection) Deneddylated by Epstein-Barr virus BPLF1 leading to a S-phase-like environment that is required for efficient replication of the viral genome. In terms of tissue distribution, expressed in lung fibroblasts.

It functions in the pathway protein modification; protein ubiquitination. Core component of multiple cullin-RING-based SCF (SKP1-CUL1-F-box protein) E3 ubiquitin-protein ligase complexes, which mediate the ubiquitination of proteins involved in cell cycle progression, signal transduction and transcription. SCF complexes and ARIH1 collaborate in tandem to mediate ubiquitination of target proteins. In the SCF complex, serves as a rigid scaffold that organizes the SKP1-F-box protein and RBX1 subunits. May contribute to catalysis through positioning of the substrate and the ubiquitin-conjugating enzyme. The E3 ubiquitin-protein ligase activity of the complex is dependent on the neddylation of the cullin subunit and exchange of the substrate recognition component is mediated by TIP120A/CAND1. The functional specificity of the SCF complex depends on the F-box protein as substrate recognition component. SCF(BTRC) and SCF(FBXW11) direct ubiquitination of CTNNB1 and participate in Wnt signaling. SCF(FBXW11) directs ubiquitination of phosphorylated NFKBIA. SCF(BTRC) directs ubiquitination of NFKBIB, NFKBIE, ATF4, SMAD3, SMAD4, CDC25A, FBXO5 and probably NFKB2. SCF(BTRC) and/or SCF(FBXW11) direct ubiquitination of CEP68. SCF(SKP2) directs ubiquitination of phosphorylated CDKN1B/p27kip and is involved in regulation of G1/S transition. SCF(SKP2) directs ubiquitination of ORC1, CDT1, RBL2, ELF4, CDKN1A, RAG2, FOXO1A, and probably MYC and TAL1. SCF(FBXW7) directs ubiquitination of CCNE1, NOTCH1 released notch intracellular domain (NICD), and probably PSEN1. SCF(FBXW2) directs ubiquitination of GCM1. SCF(FBXO32) directs ubiquitination of MYOD1. SCF(FBXO7) directs ubiquitination of BIRC2 and DLGAP5. SCF(FBXO33) directs ubiquitination of YBX1. SCF(FBXO1) directs ubiquitination of BCL6 and DTL but does not seem to direct ubiquitination of TP53. SCF(BTRC) mediates the ubiquitination of NFKBIA at 'Lys-21' and 'Lys-22'; the degradation frees the associated NFKB1-RELA dimer to translocate into the nucleus and to activate transcription. SCF(CCNF) directs ubiquitination of CCP110. SCF(FBXL3) and SCF(FBXL21) direct ubiquitination of CRY1 and CRY2. SCF(FBXO9) directs ubiquitination of TTI1 and TELO2. SCF(FBXO10) directs ubiquitination of BCL2. Neddylated CUL1-RBX1 ubiquitinates p53/TP53 recruited by Cul7-RING(FBXW8) complex. SCF(BTRC) directs 'Lys-48'-linked ubiquitination of UBR2 in the T-cell receptor signaling pathway. The SCF(FBXO31) protein ligase complex specifically mediates the ubiquitination of proteins amidated at their C-terminus in response to oxidative stress. The polypeptide is Cullin-1 (CUL1) (Homo sapiens (Human)).